The sequence spans 420 residues: Glucose-1-phosphate adenylyltransferase (420 aa).

Residues Tyr107, Gly173, 188 to 189 (EK), and Ser206 contribute to the alpha-D-glucose 1-phosphate site.

This sequence belongs to the bacterial/plant glucose-1-phosphate adenylyltransferase family. Homotetramer.

It catalyses the reaction alpha-D-glucose 1-phosphate + ATP + H(+) = ADP-alpha-D-glucose + diphosphate. The protein operates within glycan biosynthesis; glycogen biosynthesis. Involved in the biosynthesis of ADP-glucose, a building block required for the elongation reactions to produce glycogen. Catalyzes the reaction between ATP and alpha-D-glucose 1-phosphate (G1P) to produce pyrophosphate and ADP-Glc. The polypeptide is Glucose-1-phosphate adenylyltransferase (Shewanella oneidensis (strain ATCC 700550 / JCM 31522 / CIP 106686 / LMG 19005 / NCIMB 14063 / MR-1)).